Consider the following 270-residue polypeptide: Putative pyruvate, phosphate dikinase regulatory protein 2 (270 aa).

Position 151 to 158 (151 to 158) interacts with ADP; it reads GVSRTSKT.

The protein belongs to the pyruvate, phosphate/water dikinase regulatory protein family. PDRP subfamily.

It carries out the reaction N(tele)-phospho-L-histidyl/L-threonyl-[pyruvate, phosphate dikinase] + ADP = N(tele)-phospho-L-histidyl/O-phospho-L-threonyl-[pyruvate, phosphate dikinase] + AMP + H(+). The enzyme catalyses N(tele)-phospho-L-histidyl/O-phospho-L-threonyl-[pyruvate, phosphate dikinase] + phosphate + H(+) = N(tele)-phospho-L-histidyl/L-threonyl-[pyruvate, phosphate dikinase] + diphosphate. Bifunctional serine/threonine kinase and phosphorylase involved in the regulation of the pyruvate, phosphate dikinase (PPDK) by catalyzing its phosphorylation/dephosphorylation. This is Putative pyruvate, phosphate dikinase regulatory protein 2 from Listeria innocua serovar 6a (strain ATCC BAA-680 / CLIP 11262).